A 429-amino-acid polypeptide reads, in one-letter code: Probable M18 family aminopeptidase 2 (429 aa).

3 residues coordinate Zn(2+): His-82, His-156, and His-401.

It belongs to the peptidase M18 family. Requires Zn(2+) as cofactor.

The sequence is that of Probable M18 family aminopeptidase 2 from Pseudomonas syringae pv. syringae (strain B728a).